A 151-amino-acid polypeptide reads, in one-letter code: Large ribosomal subunit protein uL15 (151 aa).

The interval 37–57 is disordered; the sequence is GMRGQKSRSGRPTRPGFEGGQ.

The protein belongs to the universal ribosomal protein uL15 family. As to quaternary structure, part of the 50S ribosomal subunit.

Functionally, binds to the 23S rRNA. The polypeptide is Large ribosomal subunit protein uL15 (Prochlorococcus marinus (strain MIT 9313)).